A 220-amino-acid polypeptide reads, in one-letter code: Protein GrpE (220 aa).

Composition is skewed to polar residues over residues 1–12 (MEQGDKQATYNE) and 50–63 (AAST…QTSV). Residues 1 to 67 (MEQGDKQATY…AEQTSVEAEE (67 aa)) are disordered.

This sequence belongs to the GrpE family. In terms of assembly, homodimer.

It is found in the cytoplasm. Its function is as follows. Participates actively in the response to hyperosmotic and heat shock by preventing the aggregation of stress-denatured proteins, in association with DnaK and GrpE. It is the nucleotide exchange factor for DnaK and may function as a thermosensor. Unfolded proteins bind initially to DnaJ; upon interaction with the DnaJ-bound protein, DnaK hydrolyzes its bound ATP, resulting in the formation of a stable complex. GrpE releases ADP from DnaK; ATP binding to DnaK triggers the release of the substrate protein, thus completing the reaction cycle. Several rounds of ATP-dependent interactions between DnaJ, DnaK and GrpE are required for fully efficient folding. The polypeptide is Protein GrpE (Geobacillus thermodenitrificans (strain NG80-2)).